The chain runs to 423 residues: Ferrochelatase, mitochondrial (423 aa).

Residues 1–29 (MISRKIISTINSKTFYNKSLSYCTVNNNK) constitute a mitochondrion transit peptide. Cys-173 provides a ligand contact to [2Fe-2S] cluster. Active-site residues include His-207 and Asp-380. [2Fe-2S] cluster contacts are provided by Cys-401, Cys-404, and Cys-411.

This sequence belongs to the ferrochelatase family. In terms of assembly, monomer. [2Fe-2S] cluster is required as a cofactor.

Its subcellular location is the mitochondrion inner membrane. It catalyses the reaction heme b + 2 H(+) = protoporphyrin IX + Fe(2+). It functions in the pathway porphyrin-containing compound metabolism; protoheme biosynthesis; protoheme from protoporphyrin-IX: step 1/1. Functionally, catalyzes the ferrous insertion into protoporphyrin IX. The chain is Ferrochelatase, mitochondrial (hemH) from Dictyostelium discoideum (Social amoeba).